A 416-amino-acid polypeptide reads, in one-letter code: Keratin, type I cuticular Ha1 (416 aa).

The tract at residues 1–56 is head; sequence MPYNFCLPSLSCRTSCSSRPCVPPSCHSCTLPGACNIPANVSNCNWFCEGSFNGSE. In terms of domain architecture, IF rod spans 56–367; it reads EKETMQFLND…SLLESEDCNL (312 aa). The coil 1A stretch occupies residues 57-91; that stretch reads KETMQFLNDRLASYLEKVRQLERDNAELENLIRER. Residues 92-102 are linker 1; sequence SQQQEPLLCPS. The segment at 103 to 203 is coil 1B; the sequence is YQSYFKTIEE…HEQEVNTLRC (101 aa). Residues 204 to 219 are linker 12; the sequence is QLGDRLNVEVDAAPTV. Residues 220–363 are coil 2; the sequence is DLNRVLNETR…NTYRSLLESE (144 aa). The segment at 364–416 is tail; it reads DCNLPSNPCATTNACSKPIGPCLSNPCTSCVPPAPCTPCAPRPRCGPCNSFVR.

It belongs to the intermediate filament family. In terms of tissue distribution, present in scalp but not in hairless skin. Abundantly expressed in the differentiating cortex of growing (anagen) hair. Expression is restricted to the keratinocytes of the hair cortex and is absent from inner root sheath and medulla.

The polypeptide is Keratin, type I cuticular Ha1 (KRT31) (Homo sapiens (Human)).